The chain runs to 248 residues: Homeobox protein CHOX-CAD (248 aa).

A DNA-binding region (homeobox) is located at residues 137 to 196; it reads KDKYRVVYTDHQRLELEKEFHYSRYITIRRKAELAAALGLTERQVKIWFQNRRAKERKVN. The segment at 192–248 is disordered; it reads ERKVNKKKLQQQSQPTSTTTPTPPAVGTPGPMGTLCSGSAPSLVSSSPLTIKEEFMP. 2 stretches are compositionally biased toward low complexity: residues 201-211 and 228-240; these read QQQSQPTSTTT and SGSA…SSPL.

This sequence belongs to the Caudal homeobox family.

The protein resides in the nucleus. Functionally, may play an important role during the early steps of organogenesis. The polypeptide is Homeobox protein CHOX-CAD (CHOX-CAD1) (Gallus gallus (Chicken)).